The primary structure comprises 160 residues: NADH-quinone oxidoreductase subunit I (160 aa).

2 4Fe-4S ferredoxin-type domains span residues 51–81 (LRRY…IEAA) and 91–120 (VRYD…EGPN). 8 residues coordinate [4Fe-4S] cluster: Cys-61, Cys-64, Cys-67, Cys-71, Cys-100, Cys-103, Cys-106, and Cys-110.

It belongs to the complex I 23 kDa subunit family. In terms of assembly, NDH-1 is composed of 14 different subunits. Subunits NuoA, H, J, K, L, M, N constitute the membrane sector of the complex. [4Fe-4S] cluster is required as a cofactor.

The protein resides in the cell inner membrane. The catalysed reaction is a quinone + NADH + 5 H(+)(in) = a quinol + NAD(+) + 4 H(+)(out). Functionally, NDH-1 shuttles electrons from NADH, via FMN and iron-sulfur (Fe-S) centers, to quinones in the respiratory chain. The immediate electron acceptor for the enzyme in this species is believed to be ubiquinone. Couples the redox reaction to proton translocation (for every two electrons transferred, four hydrogen ions are translocated across the cytoplasmic membrane), and thus conserves the redox energy in a proton gradient. The polypeptide is NADH-quinone oxidoreductase subunit I (Anaplasma marginale (strain St. Maries)).